Consider the following 681-residue polypeptide: Secretion system apparatus protein SsaV (681 aa).

The next 7 helical transmembrane spans lie at 24-44 (MVLA…LPTW), 48-68 (ILIT…IYLS), 73-93 (LSVF…LTIS), 118-138 (GNLT…FIVI), 206-226 (TIAG…IAIV), 244-264 (IGDG…AGII), and 295-315 (AVVL…LAFF).

Belongs to the FHIPEP (flagella/HR/invasion proteins export pore) family.

The protein resides in the cell inner membrane. Functionally, component of Salmonella pathogenicity island 2 (SPI-2) type III secretion system, required for secretion of some type III-secreted effectors including the SpvB exotoxin. In Salmonella typhimurium (strain 14028s / SGSC 2262), this protein is Secretion system apparatus protein SsaV (ssaV).